We begin with the raw amino-acid sequence, 142 residues long: Cell division protein SepF (142 aa).

The protein belongs to the SepF family. As to quaternary structure, homodimer. Interacts with FtsZ.

It localises to the cytoplasm. Functionally, cell division protein that is part of the divisome complex and is recruited early to the Z-ring. Probably stimulates Z-ring formation, perhaps through the cross-linking of FtsZ protofilaments. Its function overlaps with FtsA. The chain is Cell division protein SepF from Syntrophomonas wolfei subsp. wolfei (strain DSM 2245B / Goettingen).